A 166-amino-acid polypeptide reads, in one-letter code: Large ribosomal subunit protein uL11 (166 aa).

Belongs to the universal ribosomal protein uL11 family.

In terms of biological role, this protein binds directly to 26S ribosomal RNA. The sequence is that of Large ribosomal subunit protein uL11 (RPL12) from Prunus armeniaca (Apricot).